A 196-amino-acid chain; its full sequence is ATP-dependent Clp protease proteolytic subunit 1 (196 aa).

Catalysis depends on Ser-96, which acts as the Nucleophile. His-121 is a catalytic residue.

It belongs to the peptidase S14 family. Fourteen ClpP subunits assemble into 2 heptameric rings which stack back to back to give a disk-like structure with a central cavity, resembling the structure of eukaryotic proteasomes.

The protein localises to the cytoplasm. It catalyses the reaction Hydrolysis of proteins to small peptides in the presence of ATP and magnesium. alpha-casein is the usual test substrate. In the absence of ATP, only oligopeptides shorter than five residues are hydrolyzed (such as succinyl-Leu-Tyr-|-NHMec, and Leu-Tyr-Leu-|-Tyr-Trp, in which cleavage of the -Tyr-|-Leu- and -Tyr-|-Trp bonds also occurs).. Cleaves peptides in various proteins in a process that requires ATP hydrolysis. Has a chymotrypsin-like activity. Plays a major role in the degradation of misfolded proteins. This Prochlorococcus marinus subsp. pastoris (strain CCMP1986 / NIES-2087 / MED4) protein is ATP-dependent Clp protease proteolytic subunit 1.